A 438-amino-acid polypeptide reads, in one-letter code: MSDLTPREIVSELDRFIIGQSDAKRAVAVALRNRWRRKQLGDDLRDEVYPKNILMIGPTGVGKTEISRRLAKLAKAPFIKVEATKFTEVGYVGRDVEQIIRDLVDAAQVMIRENMREEVKAKAHDAAEERVIEALAGKDAREQTRDMFRKKLRAGELDDTVIELEVADNSNPLGGFEIPSQPGGMGGMGPGMMNLGDLFKGMGGRTVKRRLTVAASYDLLIEDEADKLLDAETVTKEALSAVEQSGIVFIDEIDKVCAKSDARGADVSREGVQRDLLPLIEGTTVSTKHGPVKTDHILFIASGAFHIAKPSDLLPELQGRLPIRVNLRALTEDDFVRILTETDNALTRQYTALMATEEVAVEFTDGGIRALAHIAAEVNESVENIGARRLYTVLERVFEELSFTAPDRSGDAVTVDEAFVEQNLGELTRSTDLSRYVL.

ATP is bound by residues Ile-18, 60–65 (GVGKTE), Asp-251, Glu-316, and Arg-388.

Belongs to the ClpX chaperone family. HslU subfamily. In terms of assembly, a double ring-shaped homohexamer of HslV is capped on each side by a ring-shaped HslU homohexamer. The assembly of the HslU/HslV complex is dependent on binding of ATP.

It is found in the cytoplasm. ATPase subunit of a proteasome-like degradation complex; this subunit has chaperone activity. The binding of ATP and its subsequent hydrolysis by HslU are essential for unfolding of protein substrates subsequently hydrolyzed by HslV. HslU recognizes the N-terminal part of its protein substrates and unfolds these before they are guided to HslV for hydrolysis. This is ATP-dependent protease ATPase subunit HslU from Jannaschia sp. (strain CCS1).